A 274-amino-acid chain; its full sequence is Mitochondrial outer membrane protein porin 1 (274 aa).

It belongs to the eukaryotic mitochondrial porin (TC 1.B.8.1) family. Expressed in shoots and roots. Also expressed in callus, leaves, panicles, sheaths and stems.

It is found in the mitochondrion outer membrane. Forms a channel through the mitochondrial outer membrane that allows diffusion of small hydrophilic molecules. The channel adopts an open conformation at low or zero membrane potential and a closed conformation at potentials above 30-40 mV. The open state has a weak anion selectivity whereas the closed state is cation-selective. This chain is Mitochondrial outer membrane protein porin 1 (VDAC1), found in Oryza sativa subsp. japonica (Rice).